We begin with the raw amino-acid sequence, 440 residues long: Putative purine permease YwdJ (440 aa).

13 helical membrane passes run 3–23, 39–59, 67–87, 96–116, 130–150, 156–176, 188–208, 231–251, 283–303, 314–334, 341–361, 374–394, and 399–419; these read LVLGALQWTAFIIAAAIVVPV, LIQSTFFVLGIAAVIQCLKGH, PAGLWWGVYTIYAGLTGTVFA, LQGALLVSAVCFFLLSVFKVI, VYLLLLVMQLSQPIIKGILGI, GVDGLVFGLALVVIAAAFIMT, ILLALFGGWVLFAAAGAAKPI, GLIITSIFITILLIVNMLASM, LLSGLTGAIAPVPISGAAGFI, FMLGSILVIVISVIPFFMNTF, VGFAVNFVVFSAMGGLAFAEF, SIIGISLLTGVGIMFVPETAL, and PVFISLLSNGLVLGTLAAIAA.

This sequence belongs to the nucleobase:cation symporter-2 (NCS2) (TC 2.A.40) family.

It localises to the cell membrane. This is Putative purine permease YwdJ (ywdJ) from Bacillus subtilis (strain 168).